The following is a 208-amino-acid chain: Thymidylate kinase (208 aa).

10–17 (GPEGSGKT) is an ATP binding site.

Belongs to the thymidylate kinase family.

It catalyses the reaction dTMP + ATP = dTDP + ADP. Functionally, phosphorylation of dTMP to form dTDP in both de novo and salvage pathways of dTTP synthesis. The chain is Thymidylate kinase from Bacillus mycoides (strain KBAB4) (Bacillus weihenstephanensis).